The primary structure comprises 415 residues: Erythronolide mycarosyltransferase (415 aa).

It belongs to the glycosyltransferase 28 family.

It catalyses the reaction dTDP-beta-L-mycarose + erythronolide B = 3-O-alpha-L-mycarosylerythronolide B + dTDP + H(+). Its function is as follows. Involved in the biosynthesis of the macrolide antibiotic erythromycin. Catalyzes the reversible transfer of mycarosyl from dTDP-beta-L-mycarose to erythronolide B to yield 3-alpha-L-mycarosylerythronolide B. It can also use TDP-beta-L-cladinose. This chain is Erythronolide mycarosyltransferase, found in Saccharopolyspora erythraea (Streptomyces erythraeus).